A 142-amino-acid chain; its full sequence is DNA-directed RNA polymerase subunit omega (142 aa).

The tract at residues 104 to 142 (FNTDADVDQESTDIQDDEVENEMSNQDSEDIDDEVDNEE) is disordered. A compositionally biased stretch (acidic residues) spans 108-142 (ADVDQESTDIQDDEVENEMSNQDSEDIDDEVDNEE).

The protein belongs to the RNA polymerase subunit omega family. As to quaternary structure, the RNAP catalytic core consists of 2 alpha, 1 beta, 1 beta' and 1 omega subunit. When a sigma factor is associated with the core the holoenzyme is formed, which can initiate transcription.

The enzyme catalyses RNA(n) + a ribonucleoside 5'-triphosphate = RNA(n+1) + diphosphate. Promotes RNA polymerase assembly. Latches the N- and C-terminal regions of the beta' subunit thereby facilitating its interaction with the beta and alpha subunits. The polypeptide is DNA-directed RNA polymerase subunit omega (Wolbachia sp. subsp. Brugia malayi (strain TRS)).